The chain runs to 643 residues: Protein cueball (643 aa).

Positions 1–21 (MMIWVPALIFLSACLLPRSNG) are cleaved as a signal peptide. The Extracellular portion of the chain corresponds to 22–530 (TPLEWDFAVT…VCQTPFVWTS (509 aa)). N-linked (GlcNAc...) asparagine glycosylation is found at Asn-77 and Asn-103. 3 LDL-receptor class B repeats span residues 116–163 (RNLF…DICR), 164–208 (RKLY…DQLS), and 209–254 (DRLF…TNDA). Asn-172 is a glycosylation site (N-linked (GlcNAc...) asparagine). Polar residues predominate over residues 276–290 (ATTTVRPEVESSTDG). The tract at residues 276 to 303 (ATTTVRPEVESSTDGTESESKQESEPVE) is disordered. Asn-312 carries N-linked (GlcNAc...) asparagine glycosylation. 3 consecutive EGF-like domains span residues 363 to 397 (RMDQ…SRCE), 398 to 429 (IREC…FTGE), and 432 to 470 (EVSN…ERCE). 7 disulfides stabilise this stretch: Cys-372/Cys-385, Cys-387/Cys-396, Cys-401/Cys-410, Cys-405/Cys-420, Cys-436/Cys-446, Cys-440/Cys-458, and Cys-460/Cys-469. N-linked (GlcNAc...) asparagine glycans are attached at residues Asn-472 and Asn-507. A helical transmembrane segment spans residues 531-551 (SVIIILVVGIVFSLLLITTII). Residues 552 to 643 (HGIRRLYKPK…LIHNMEDDLY (92 aa)) are Cytoplasmic-facing.

It belongs to the cueball family.

It localises to the cell membrane. Has a role in spermatogenesis and oogenesis. The polypeptide is Protein cueball (Drosophila ananassae (Fruit fly)).